A 318-amino-acid chain; its full sequence is Olfactory receptor 13C5 (318 aa).

Residues 1–25 (MEWENHTILVEFFLKGLSGHPRLEL) are Extracellular-facing. An N-linked (GlcNAc...) asparagine glycan is attached at N5. A helical membrane pass occupies residues 26 to 46 (LFFVLIFIMYVVILLGNGTLI). At 47–54 (LISILDPH) the chain is on the cytoplasmic side. Residues 55 to 75 (LHTPMYFFLGNLSFLDICYTT) traverse the membrane as a helical segment. The Extracellular segment spans residues 76-99 (TSIPSTLVSFLSERKTISLSGCAV). A disulfide bridge connects residues C97 and C189. The chain crosses the membrane as a helical span at residues 100 to 120 (QMFLSLAMGTTECVLLGVMAF). At 121 to 139 (DRYVAICNPLRYPIIMSKD) the chain is on the cytoplasmic side. The chain crosses the membrane as a helical span at residues 140–160 (AYVPMAAGSWIIGAVNSAVQT). Residues 161–197 (VFVVQLPFCRNNIINHFTCEILAVMKLACADISGNEF) are Extracellular-facing. Residues 198 to 217 (ILLVTTTLFLLTPLLLIIVS) traverse the membrane as a helical segment. Residues 218–237 (YTLIILSIFKISSSEGRSKP) are Cytoplasmic-facing. The helical transmembrane segment at 238-258 (SSTCSARLTVVITFCGTIFLM) threads the bilayer. Over 259–277 (YMKPKSQETLNSDDLDATD) the chain is Extracellular. The helical transmembrane segment at 278–298 (KLIFIFYRVMTPMMNPLIYSL) threads the bilayer. Residues 299 to 318 (RNKDVKEAVKHLLRRKNFNK) lie on the Cytoplasmic side of the membrane.

This sequence belongs to the G-protein coupled receptor 1 family.

The protein localises to the cell membrane. Its function is as follows. Odorant receptor. This Homo sapiens (Human) protein is Olfactory receptor 13C5 (OR13C5).